Reading from the N-terminus, the 77-residue chain is Omega-conotoxin-like 6 (77 aa).

An N-terminal signal peptide occupies residues 1–22; that stretch reads MKLTCVVIIAVLLLTACQLITA. Residues 23–50 constitute a propeptide that is removed on maturation; that stretch reads DDSRGVQKHRSLRSTTKVSKSTSCMEAG. Cystine bridges form between Cys46–Cys61, Cys53–Cys64, and Cys60–Cys71.

This sequence belongs to the conotoxin O1 superfamily. Expressed by the venom duct.

It localises to the secreted. Omega-conotoxins act at presynaptic membranes, they bind and block voltage-gated calcium channels (Cav). The protein is Omega-conotoxin-like 6 of Conus striatus (Striated cone).